The primary structure comprises 50 residues: Large ribosomal subunit protein eL39 (50 aa).

The protein belongs to the eukaryotic ribosomal protein eL39 family.

The polypeptide is Large ribosomal subunit protein eL39 (Methanoculleus marisnigri (strain ATCC 35101 / DSM 1498 / JR1)).